The following is a 239-amino-acid chain: UDP-2,3-diacylglucosamine hydrolase (239 aa).

Positions 9, 11, 42, 80, and 115 each coordinate Mn(2+). 80 to 81 (NR) lines the substrate pocket. Substrate is bound by residues Asp-123, Ser-161, Lys-165, Lys-168, and His-196. Residues His-196 and His-198 each coordinate Mn(2+).

Belongs to the LpxH family. Mn(2+) is required as a cofactor.

The protein resides in the cell inner membrane. The enzyme catalyses UDP-2-N,3-O-bis[(3R)-3-hydroxytetradecanoyl]-alpha-D-glucosamine + H2O = 2-N,3-O-bis[(3R)-3-hydroxytetradecanoyl]-alpha-D-glucosaminyl 1-phosphate + UMP + 2 H(+). Its pathway is glycolipid biosynthesis; lipid IV(A) biosynthesis; lipid IV(A) from (3R)-3-hydroxytetradecanoyl-[acyl-carrier-protein] and UDP-N-acetyl-alpha-D-glucosamine: step 4/6. Its function is as follows. Hydrolyzes the pyrophosphate bond of UDP-2,3-diacylglucosamine to yield 2,3-diacylglucosamine 1-phosphate (lipid X) and UMP by catalyzing the attack of water at the alpha-P atom. Involved in the biosynthesis of lipid A, a phosphorylated glycolipid that anchors the lipopolysaccharide to the outer membrane of the cell. This Pasteurella multocida (strain Pm70) protein is UDP-2,3-diacylglucosamine hydrolase.